The primary structure comprises 172 residues: Probable tryptophan transport protein (172 aa).

Helical transmembrane passes span 7–29 (VIMA…FLGG), 49–71 (VQNV…AFPA), 104–126 (AVLT…LLIV), and 136–158 (FAAV…YPIV).

The protein belongs to the vitamin uptake transporter (VUT/ECF) (TC 2.A.88) family. TrpP subfamily.

The protein resides in the cell membrane. Its function is as follows. Probably involved in tryptophan uptake. This is Probable tryptophan transport protein (trpP) from Bacillus subtilis (strain 168).